The following is a 313-amino-acid chain: uncharacterized protein (313 aa).

Positions Tyr6–Gly152 constitute an N-acetyltransferase domain.

In terms of biological role, to the C-terminal of C.elegans F21C10.9. This is an uncharacterized protein from Caenorhabditis elegans.